Reading from the N-terminus, the 350-residue chain is Hydroxymethylglutaryl-CoA synthase (350 aa).

Catalysis depends on E83, which acts as the Proton donor/acceptor. The Acyl-thioester intermediate role is filled by C115. Residues C115 and T156 each coordinate (3S)-3-hydroxy-3-methylglutaryl-CoA. CoA is bound at residue R204. (3S)-3-hydroxy-3-methylglutaryl-CoA contacts are provided by T206 and H239. Catalysis depends on H239, which acts as the Proton donor/acceptor. K244 contacts CoA. Residues N271 and S301 each contribute to the (3S)-3-hydroxy-3-methylglutaryl-CoA site.

Belongs to the thiolase-like superfamily. Archaeal HMG-CoA synthase family. As to quaternary structure, interacts with acetoacetyl-CoA thiolase that catalyzes the precedent step in the pathway and with a DUF35 protein. The acetoacetyl-CoA thiolase/HMG-CoA synthase complex channels the intermediate via a fused CoA-binding site, which allows for efficient coupling of the endergonic thiolase reaction with the exergonic HMGCS reaction.

It catalyses the reaction acetoacetyl-CoA + acetyl-CoA + H2O = (3S)-3-hydroxy-3-methylglutaryl-CoA + CoA + H(+). Its pathway is metabolic intermediate biosynthesis; (R)-mevalonate biosynthesis; (R)-mevalonate from acetyl-CoA: step 2/3. Its function is as follows. Catalyzes the condensation of acetyl-CoA with acetoacetyl-CoA to form 3-hydroxy-3-methylglutaryl-CoA (HMG-CoA). Functions in the mevalonate (MVA) pathway leading to isopentenyl diphosphate (IPP), a key precursor for the biosynthesis of isoprenoid compounds that are building blocks of archaeal membrane lipids. This chain is Hydroxymethylglutaryl-CoA synthase, found in Pyrococcus horikoshii (strain ATCC 700860 / DSM 12428 / JCM 9974 / NBRC 100139 / OT-3).